We begin with the raw amino-acid sequence, 540 residues long: 2,3-bisphosphoglycerate-independent phosphoglycerate mutase (540 aa).

Positions 24 and 74 each coordinate Mn(2+). The active-site Phosphoserine intermediate is serine 74. Residues histidine 135, 165 to 166 (RD), arginine 197, arginine 203, 268 to 271 (RPDR), and lysine 341 each bind substrate. Mn(2+) contacts are provided by aspartate 408, histidine 412, aspartate 449, histidine 450, and histidine 467.

This sequence belongs to the BPG-independent phosphoglycerate mutase family. Monomer. Mn(2+) is required as a cofactor.

The enzyme catalyses (2R)-2-phosphoglycerate = (2R)-3-phosphoglycerate. It participates in carbohydrate degradation; glycolysis; pyruvate from D-glyceraldehyde 3-phosphate: step 3/5. Catalyzes the interconversion of 2-phosphoglycerate and 3-phosphoglycerate. This is 2,3-bisphosphoglycerate-independent phosphoglycerate mutase from Prochlorococcus marinus (strain MIT 9303).